A 345-amino-acid polypeptide reads, in one-letter code: Aspartate--ammonia ligase (345 aa).

The protein belongs to the class-II aminoacyl-tRNA synthetase family. AsnA subfamily.

It localises to the cytoplasm. It catalyses the reaction L-aspartate + NH4(+) + ATP = L-asparagine + AMP + diphosphate + H(+). The protein operates within amino-acid biosynthesis; L-asparagine biosynthesis; L-asparagine from L-aspartate (ammonia route): step 1/1. This Bacteroides thetaiotaomicron (strain ATCC 29148 / DSM 2079 / JCM 5827 / CCUG 10774 / NCTC 10582 / VPI-5482 / E50) protein is Aspartate--ammonia ligase.